A 328-amino-acid chain; its full sequence is Twinfilin (328 aa).

The ADF-H 1 domain maps to 1 to 137; the sequence is MSASVELKPT…DYQQIMKSLS (137 aa). Ser143 is subject to Phosphoserine. In terms of domain architecture, ADF-H 2 spans 173–304; the sequence is GVAMSIDDKA…TEKEILHAAG (132 aa). Residues 302 to 328 form a disordered region; the sequence is AAGISSPQAETSTTKTGFSRPRPPRRR. A compositionally biased stretch (polar residues) spans 306–318; sequence SSPQAETSTTKTG.

Belongs to the actin-binding proteins ADF family. Twinfilin subfamily. As to quaternary structure, interacts with G-actin; ADP-actin form.

The protein localises to the cytoplasm. It localises to the cytoskeleton. Actin-binding protein involved in motile and morphological processes. Inhibits actin polymerization, likely by sequestering G-actin. Prevents actin filament assembly by forming a 1:1 complex with actin monomers, and inhibits the nucleotide exchange reaction of actin monomers. The sequence is that of Twinfilin (twf1) from Schizosaccharomyces pombe (strain 972 / ATCC 24843) (Fission yeast).